The primary structure comprises 86 residues: Cell division topological specificity factor (86 aa).

This sequence belongs to the MinE family.

Functionally, prevents the cell division inhibition by proteins MinC and MinD at internal division sites while permitting inhibition at polar sites. This ensures cell division at the proper site by restricting the formation of a division septum at the midpoint of the long axis of the cell. The protein is Cell division topological specificity factor of Bordetella petrii (strain ATCC BAA-461 / DSM 12804 / CCUG 43448).